We begin with the raw amino-acid sequence, 436 residues long: MEGEAGGTLMQEAWESIDAARNYKNELQERMIALELARNQIKESAAQTCHALRQHFVDLKTAITKLLDERQETLLQEVSAIEQENIKPLDDCQKLLEQGVNTADDLLKEGEMAVSGIAGNNENLYNFTNKALHNQLDSLPEVPSLVEVPCLSAQLDEIFLCVVRDHICKLGSVASRPPVQIEELIERPGAILVKWCKCDDDFVAQDYRLQYRKNTASHFEDVYVGSESEFIVLQIDPNVDYQFRVCARGDGRQEWSPWSVLQTSRTTLVPHEWSTGYDGYSLSSRRNIALRNDSVSHGVLYSKAATYLSGQTLTFRVETVGQMDKHDGIGVCVEQFDCESLQRDKAVCVSTSGAVYVNGKEMTNQLPPVSPGSTITFDMEIMTLGQTNNEGPSQKRRVTISSSNREVVFDWLLEQSCDSLYFGCSFVHPGWKVLVF.

The stretch at 9–87 forms a coiled coil; sequence LMQEAWESID…VSAIEQENIK (79 aa). Residues 177–270 enclose the Fibronectin type-III domain; it reads PPVQIEELIE…LQTSRTTLVP (94 aa).

The protein belongs to the cytokine receptor-like factor 3 family.

The protein resides in the cytoplasm. In terms of biological role, may play a role in the negative regulation of cell cycle progression. This Xenopus laevis (African clawed frog) protein is Cytokine receptor-like factor 3 (crlf3).